The chain runs to 228 residues: Phosphatidate cytidylyltransferase (228 aa).

The next 6 helical transmembrane spans lie at 31–51 (FVIA…LVGL), 65–85 (INYL…LIFL), 93–113 (LVIM…MIGG), 131–151 (WTGL…VSLI), 165–185 (IYLF…DLFI), and 206–226 (GVLD…CINI).

This sequence belongs to the CDS family.

The protein resides in the cell membrane. The enzyme catalyses a 1,2-diacyl-sn-glycero-3-phosphate + CTP + H(+) = a CDP-1,2-diacyl-sn-glycerol + diphosphate. The protein operates within phospholipid metabolism; CDP-diacylglycerol biosynthesis; CDP-diacylglycerol from sn-glycerol 3-phosphate: step 3/3. The protein is Phosphatidate cytidylyltransferase (cdsA) of Rickettsia prowazekii (strain Madrid E).